The sequence spans 198 residues: Recombination protein RecR (198 aa).

The C4-type zinc-finger motif lies at 57 to 72; it reads CRVCANIADENPCGIC. The 96-residue stretch at 80–175 folds into the Toprim domain; that stretch reads GLICVVERPR…RVTRLAFGLP (96 aa).

The protein belongs to the RecR family.

May play a role in DNA repair. It seems to be involved in an RecBC-independent recombinational process of DNA repair. It may act with RecF and RecO. This chain is Recombination protein RecR, found in Desulforudis audaxviator (strain MP104C).